The chain runs to 350 residues: MTQSLVISIDAMGGDHGPSVVVPAAARAARDLPHVRFLLHGDEAAVRAEVARCAGLAERTEVRHADRVIGMDEKPAQALRRGKGTSMWGAVEAIREGDAHVAVSAGNTGALMAISKLILRMSADLDRPALVASIPHAKGVTTFLDVGANVDCDAERLVEFAIMGEAYHRAAHGVAKPTVGLLNVGSEEMKGHEEVREANRILREGGFDLEYRGFVEGDDLTKGSVDVVVTDGFTGNVALKAMEGAARFMYGELRAALTAGPFSSLGALLARPSLLRFRERMSPPPAAPLLGLNGLVLKCHGGAGDREFAKAIRAAADVAQSGFASEIERNMRRLPAALSPAAPSPADGAA.

The protein belongs to the PlsX family. In terms of assembly, homodimer. Probably interacts with PlsY.

It localises to the cytoplasm. It carries out the reaction a fatty acyl-[ACP] + phosphate = an acyl phosphate + holo-[ACP]. It participates in lipid metabolism; phospholipid metabolism. Its function is as follows. Catalyzes the reversible formation of acyl-phosphate (acyl-PO(4)) from acyl-[acyl-carrier-protein] (acyl-ACP). This enzyme utilizes acyl-ACP as fatty acyl donor, but not acyl-CoA. This is Phosphate acyltransferase from Phenylobacterium zucineum (strain HLK1).